The sequence spans 282 residues: PILR alpha-associated neural protein (282 aa).

An N-terminal signal peptide occupies residues 1–31 (MESRMWPALLLSHLLPLWPLLLLPLPPPAQG). The tract at residues 28–99 (PAQGSSSSPR…PSGFEEGPPS (72 aa)) is disordered. At 32 to 178 (SSSSPRTPPA…FGGRGEGVDP (147 aa)) the chain is on the extracellular side. Residues 46–56 (PCARGGPSAPR) show a composition bias toward low complexity. Thr140 is a glycosylation site (O-linked (GalNAc...) threonine). A helical membrane pass occupies residues 179–199 (QLYVTITISIIIVLVATGIIF). The Cytoplasmic segment spans residues 200 to 282 (KFCWDRSQKR…QLNRIPLVNL (83 aa)). The interval 209 to 282 (RRRPSGQQGA…QLNRIPLVNL (74 aa)) is disordered. Residues 213–229 (SGQQGALRQEESQQPLT) show a composition bias toward polar residues.

In terms of processing, O-glycosylation at Thr-140 is essential for recognition by PILRA. Mainly expressed in adult brain and cerebellum. Weaker expression in fetal brain and virtually no expression in spleen, heart, kidney, liver and dorsal ganglion relative to brain.

It localises to the membrane. Functionally, acts as a ligand for PILRA in neural tissues, where it may be involved in immune regulation. This is PILR alpha-associated neural protein (PIANP) from Homo sapiens (Human).